Consider the following 365-residue polypeptide: Aminomethyltransferase (365 aa).

It belongs to the GcvT family. The glycine cleavage system is composed of four proteins: P, T, L and H.

It catalyses the reaction N(6)-[(R)-S(8)-aminomethyldihydrolipoyl]-L-lysyl-[protein] + (6S)-5,6,7,8-tetrahydrofolate = N(6)-[(R)-dihydrolipoyl]-L-lysyl-[protein] + (6R)-5,10-methylene-5,6,7,8-tetrahydrofolate + NH4(+). The glycine cleavage system catalyzes the degradation of glycine. The sequence is that of Aminomethyltransferase from Yersinia pestis bv. Antiqua (strain Antiqua).